A 190-amino-acid polypeptide reads, in one-letter code: Translation initiation factor IF-3 (190 aa).

The protein belongs to the IF-3 family. As to quaternary structure, monomer.

It localises to the cytoplasm. Its function is as follows. IF-3 binds to the 30S ribosomal subunit and shifts the equilibrium between 70S ribosomes and their 50S and 30S subunits in favor of the free subunits, thus enhancing the availability of 30S subunits on which protein synthesis initiation begins. This chain is Translation initiation factor IF-3, found in Prochlorococcus marinus (strain MIT 9312).